The chain runs to 481 residues: Proline--tRNA ligase (481 aa).

Belongs to the class-II aminoacyl-tRNA synthetase family. ProS type 3 subfamily. As to quaternary structure, homodimer.

The protein resides in the cytoplasm. The catalysed reaction is tRNA(Pro) + L-proline + ATP = L-prolyl-tRNA(Pro) + AMP + diphosphate. Catalyzes the attachment of proline to tRNA(Pro) in a two-step reaction: proline is first activated by ATP to form Pro-AMP and then transferred to the acceptor end of tRNA(Pro). In Chloroherpeton thalassium (strain ATCC 35110 / GB-78), this protein is Proline--tRNA ligase.